Reading from the N-terminus, the 590-residue chain is Pre-mRNA-splicing factor CEF1 (590 aa).

HTH myb-type domains lie at 1–60 and 63–110; these read MPPV…NPKL and TEFS…ESED. 2 DNA-binding regions (H-T-H motif) span residues 33-56 and 84-106; these read WSKVASLLQKKTARQSELRWNEYL and WRTIADMMARPAQVCVERYNRLL. Basic and acidic residues-rich tracts occupy residues 244 to 263, 271 to 281, and 337 to 351; these read FERKVNRKGLDGNKDKPSKK, HDENEHVEKAA, and LLPHDSGQEDNERSN. Disordered stretches follow at residues 244 to 286 and 336 to 355; these read FERK…GEST and ELLPHDSGQEDNERSNIKSG. The interval 460–490 is interaction with PRP19 and self-interaction; sequence ANAINKEPHMVPEDTVDFLKEVESRMQHITQ.

The protein belongs to the CEF1 family. As to quaternary structure, belongs to the NTC complex (or PRP19-associated complex), composed of at least CEF1, CLF1, ISY1, NTC20, SNT309, SYF1, SYF2, and PRP19. The NTC complex associates with the spliceosome after the release of the U1 and U4 snRNAs and forms the CWC spliceosome subcomplex (or CEF1-associated complex) reminiscent of a late-stage spliceosome composed also of the U2, U5 and U6 snRNAs and at least BUD13, BUD31, BRR2, CDC40, CUS1, CWC2, CWC15, CWC21, CWC22, CWC23, CWC24, CWC25, CWC27, ECM2, HSH155, IST3, LEA1, MSL1, PRP8, PRP9, PRP11, PRP21, PRP22, PRP45, PRP46, SLU7, SMB1, SMD1, SMD2, SMD3, SMX2, SMX3, SNU114, SPP2, RSE1 and YJU2. Interacts with CLF1, ISY1, NTC20, PRP19, PRP46, SYF1 and SYF2.

The protein resides in the cytoplasm. It localises to the nucleus. Functionally, involved in pre-mRNA splicing and cell cycle control. Required for the binding of the NTC complex (or PRP19-associated complex) components to the spliceosome to mediate conformational rearrangement or to stabilize the structure of the spliceosome after U4 snRNA dissociation, which leads to spliceosome maturation. Its absence leads to an arrest of the cell cycle, possibly due to the inefficient splicing of TUB1. The chain is Pre-mRNA-splicing factor CEF1 (CEF1) from Saccharomyces cerevisiae (strain ATCC 204508 / S288c) (Baker's yeast).